Consider the following 274-residue polypeptide: MPFRSNNPITRDELLSRFFPQFHPVTTFNSGLSGGSFLIEHQGQRFVVRQPHDPDAPQSAFLRQYRALSQLPASIAPKPHLYLRDWMVVDYLPGAVKTYLPDTNELAGLLYYLHQQPRFGWRITLLPLLELYWQQSDPARRTVGWLRMLKRLRKAREPRPLRLSPLHMDVHAGNLVHSASGLKLIDWEYAGDGDIALELAAVWVENTEQHRQLVNDYATRAKIYPAQLWRQVRRWFPWLLMLKGGWFEYRWRQTGDQQFIRLADDTWRQLLIKQ.

It belongs to the thiamine kinase family.

The catalysed reaction is thiamine + ATP = thiamine phosphate + ADP + H(+). It participates in cofactor biosynthesis; thiamine diphosphate biosynthesis; thiamine phosphate from thiamine: step 1/1. Catalyzes the ATP-dependent phosphorylation of thiamine to thiamine phosphate. Is involved in thiamine salvage. This chain is Thiamine kinase, found in Shigella flexneri serotype 5b (strain 8401).